The following is a 352-amino-acid chain: Anthranilate phosphoribosyltransferase (352 aa).

5-phospho-alpha-D-ribose 1-diphosphate is bound by residues Gly-94, 97–98 (GS), Ser-102, 104–107 (NIST), 122–130 (KHGNRAVSS), and Ser-134. Gly-94 is a binding site for anthranilate. Ser-106 serves as a coordination point for Mg(2+). Asn-125 provides a ligand contact to anthranilate. Residue Arg-180 coordinates anthranilate. Positions 239 and 240 each coordinate Mg(2+).

The protein belongs to the anthranilate phosphoribosyltransferase family. As to quaternary structure, homodimer. Mg(2+) is required as a cofactor.

The catalysed reaction is N-(5-phospho-beta-D-ribosyl)anthranilate + diphosphate = 5-phospho-alpha-D-ribose 1-diphosphate + anthranilate. The protein operates within amino-acid biosynthesis; L-tryptophan biosynthesis; L-tryptophan from chorismate: step 2/5. In terms of biological role, catalyzes the transfer of the phosphoribosyl group of 5-phosphorylribose-1-pyrophosphate (PRPP) to anthranilate to yield N-(5'-phosphoribosyl)-anthranilate (PRA). The chain is Anthranilate phosphoribosyltransferase from Citrifermentans bemidjiense (strain ATCC BAA-1014 / DSM 16622 / JCM 12645 / Bem) (Geobacter bemidjiensis).